The following is a 311-amino-acid chain: Coproporphyrin III ferrochelatase 1 (311 aa).

Residues Y12, R29, 45–46 (RY), S53, and Y124 contribute to the Fe-coproporphyrin III site. Fe(2+) is bound by residues H182 and E263.

This sequence belongs to the ferrochelatase family.

It localises to the cytoplasm. It carries out the reaction Fe-coproporphyrin III + 2 H(+) = coproporphyrin III + Fe(2+). Its pathway is porphyrin-containing compound metabolism; protoheme biosynthesis. Its function is as follows. Involved in coproporphyrin-dependent heme b biosynthesis. Catalyzes the insertion of ferrous iron into coproporphyrin III to form Fe-coproporphyrin III. In Bacillus thuringiensis subsp. konkukian (strain 97-27), this protein is Coproporphyrin III ferrochelatase 1.